A 117-amino-acid polypeptide reads, in one-letter code: Holo-[acyl-carrier-protein] synthase (117 aa).

The Mg(2+) site is built by D8 and E58.

The protein belongs to the P-Pant transferase superfamily. AcpS family. Mg(2+) serves as cofactor.

It localises to the cytoplasm. The enzyme catalyses apo-[ACP] + CoA = holo-[ACP] + adenosine 3',5'-bisphosphate + H(+). Its function is as follows. Transfers the 4'-phosphopantetheine moiety from coenzyme A to a Ser of acyl-carrier-protein. This Staphylococcus epidermidis (strain ATCC 35984 / DSM 28319 / BCRC 17069 / CCUG 31568 / BM 3577 / RP62A) protein is Holo-[acyl-carrier-protein] synthase.